The sequence spans 963 residues: Iron-responsive element-binding protein 2 (963 aa).

Positions 512, 578, and 581 each coordinate [4Fe-4S] cluster.

This sequence belongs to the aconitase/IPM isomerase family. In terms of assembly, interacts with RBCK1 only in iron-rich conditions. Interacts (when associated with the 4Fe-4S) with FBXL5. Interacts with CIAO1 and CIAO2A. [4Fe-4S] cluster serves as cofactor. Post-translationally, ubiquitinated and degraded by the proteasome in presence of high level of iron and oxygen. Ubiquitinated by a SCF complex containing FBXL5. Upon iron and oxygen depletion FBXL5 is degraded, preventing ubiquitination and allowing its RNA-binding activity.

Its subcellular location is the cytoplasm. Its function is as follows. RNA-binding protein that binds to iron-responsive elements (IRES), which are stem-loop structures found in the 5'-UTR of ferritin, and delta aminolevulinic acid synthase mRNAs, and in the 3'-UTR of transferrin receptor mRNA. Binding to the IRE element in ferritin results in the repression of its mRNA translation. Binding of the protein to the transferrin receptor mRNA inhibits the degradation of this otherwise rapidly degraded mRNA. The sequence is that of Iron-responsive element-binding protein 2 (Ireb2) from Mus musculus (Mouse).